Here is a 362-residue protein sequence, read N- to C-terminus: Nicotinate-nucleotide--dimethylbenzimidazole phosphoribosyltransferase (362 aa).

Glutamate 321 serves as the catalytic Proton acceptor.

The protein belongs to the CobT family.

The enzyme catalyses 5,6-dimethylbenzimidazole + nicotinate beta-D-ribonucleotide = alpha-ribazole 5'-phosphate + nicotinate + H(+). It participates in nucleoside biosynthesis; alpha-ribazole biosynthesis; alpha-ribazole from 5,6-dimethylbenzimidazole: step 1/2. In terms of biological role, catalyzes the synthesis of alpha-ribazole-5'-phosphate from nicotinate mononucleotide (NAMN) and 5,6-dimethylbenzimidazole (DMB). The chain is Nicotinate-nucleotide--dimethylbenzimidazole phosphoribosyltransferase from Clostridium tetani (strain Massachusetts / E88).